The following is a 390-amino-acid chain: Delta-aminolevulinic acid dehydratase, chloroplastic (390 aa).

Residues 1-24 constitute a chloroplast transit peptide; sequence MQMMQRNVVGQRPVAGSRRSLVVA. Positions 34-69 are disordered; it reads VSTNGKHRTGVPEGTPIVTPQDLPSRPRRNRRSESF. The active-site Schiff-base intermediate with substrate is lysine 251. 5-aminolevulinate contacts are provided by arginine 261 and lysine 281. Glutamate 297 contributes to the Mg(2+) binding site. The active-site Schiff-base intermediate with substrate is lysine 312. 2 residues coordinate 5-aminolevulinate: serine 338 and tyrosine 377.

Belongs to the ALAD family. Homooctamer. The cofactor is Mg(2+).

It localises to the plastid. The protein resides in the chloroplast. The catalysed reaction is 2 5-aminolevulinate = porphobilinogen + 2 H2O + H(+). It functions in the pathway porphyrin-containing compound metabolism; protoporphyrin-IX biosynthesis; coproporphyrinogen-III from 5-aminolevulinate: step 1/4. In terms of biological role, catalyzes an early step in the biosynthesis of tetrapyrroles. Binds two molecules of 5-aminolevulinate per subunit, each at a distinct site, and catalyzes their condensation to form porphobilinogen. This chain is Delta-aminolevulinic acid dehydratase, chloroplastic (HEMB), found in Chlamydomonas reinhardtii (Chlamydomonas smithii).